Here is a 231-residue protein sequence, read N- to C-terminus: ATP-dependent dethiobiotin synthetase BioD (231 aa).

Position 12-17 (12-17 (EVGKTV)) interacts with ATP. Thr-16 serves as a coordination point for Mg(2+). Residue Lys-37 is part of the active site. Position 41 (Ser-41) interacts with substrate. ATP is bound by residues Asp-51, 112 to 115 (EGAG), and 202 to 204 (PKL). Residues Asp-51 and Glu-112 each contribute to the Mg(2+) site.

Belongs to the dethiobiotin synthetase family. Homodimer. Requires Mg(2+) as cofactor.

It is found in the cytoplasm. The enzyme catalyses (7R,8S)-7,8-diammoniononanoate + CO2 + ATP = (4R,5S)-dethiobiotin + ADP + phosphate + 3 H(+). It functions in the pathway cofactor biosynthesis; biotin biosynthesis; biotin from 7,8-diaminononanoate: step 1/2. Its function is as follows. Catalyzes a mechanistically unusual reaction, the ATP-dependent insertion of CO2 between the N7 and N8 nitrogen atoms of 7,8-diaminopelargonic acid (DAPA, also called 7,8-diammoniononanoate) to form a ureido ring. The polypeptide is ATP-dependent dethiobiotin synthetase BioD (Bacillus subtilis (strain 168)).